A 333-amino-acid polypeptide reads, in one-letter code: 4-hydroxyproline epimerase (333 aa).

The Proton acceptor role is filled by Cys-90. Substrate is bound by residues 91 to 92 and Asp-249; that span reads GH. Cys-253 (proton donor) is an active-site residue. Substrate is bound at residue 254-255; the sequence is GT.

The protein belongs to the proline racemase family. As to quaternary structure, homodimer.

It catalyses the reaction trans-4-hydroxy-L-proline = cis-4-hydroxy-D-proline. In terms of biological role, allows intracellular utilization of 4-hydroxyproline, one of the major constituents of host collagen, by converting 4-hydroxy-L-proline to 4-hydroxy-D-proline, which can be further metabolized by intracellular 4-hydroxy-D-proline oxidases. Strong B-cell mitogen. Plays an important role in the regulation of intra- and extracellular amino acid pools, allowing the bacterium to profit from host precursors and enzymatic pathways. The chain is 4-hydroxyproline epimerase from Brucella suis (strain ATCC 23445 / NCTC 10510).